Here is a 174-residue protein sequence, read N- to C-terminus: Gamma-crystallin D (174 aa).

2 consecutive Beta/gamma crystallin 'Greek key' domains span residues 2–40 and 41–83; these read GKITFYEDRGFQGRHYECSTDHSNLQPYFSRCNSVRVDS and GCWM…RLIP. A connecting peptide region spans residues 84 to 87; sequence HAGS. Beta/gamma crystallin 'Greek key' domains follow at residues 88-128 and 129-171; these read HRIR…NVLE and GCWV…RRVM.

This sequence belongs to the beta/gamma-crystallin family. In terms of tissue distribution, detected in the superior olivary complex and fibers of the ventral aoustic stria of the auditory hindbrain.

Its function is as follows. Crystallins are the dominant structural components of the vertebrate eye lens. This Rattus norvegicus (Rat) protein is Gamma-crystallin D (Crygd).